We begin with the raw amino-acid sequence, 324 residues long: Viral cathepsin (324 aa).

The first 16 residues, 1–16, serve as a signal peptide directing secretion; sequence MNKIMLCLLVCGVVHA. A propeptide spans 17-113 (activation peptide); that stretch reads ATYDLLKAPN…VILDRPPDRG (97 aa). Cystine bridges form between Cys134–Cys175, Cys168–Cys208, and Cys263–Cys311. Cys137 is a catalytic residue. Asn159 carries N-linked (GlcNAc...) asparagine; by host glycosylation. Catalysis depends on residues His270 and Asn290.

Belongs to the peptidase C1 family. Synthesized as an inactive proenzyme and activated by proteolytic removal of the inhibitory propeptide.

The enzyme catalyses Endopeptidase of broad specificity, hydrolyzing substrates of both cathepsin L and cathepsin B.. Functionally, cysteine protease that plays an essential role in host liquefaction to facilitate horizontal transmission of the virus. May participate in the degradation of foreign protein expressed by the baculovirus system. The chain is Viral cathepsin (VCATH) from Orgyia pseudotsugata (Douglas-fir tussock moth).